A 189-amino-acid polypeptide reads, in one-letter code: Potassium-transporting ATPase KdpC subunit (189 aa).

The helical transmembrane segment at 6–26 (PAILMLIIFTILCGGIYPAVV) threads the bilayer.

Belongs to the KdpC family. As to quaternary structure, the system is composed of three essential subunits: KdpA, KdpB and KdpC.

The protein localises to the cell inner membrane. Functionally, part of the high-affinity ATP-driven potassium transport (or Kdp) system, which catalyzes the hydrolysis of ATP coupled with the electrogenic transport of potassium into the cytoplasm. This subunit acts as a catalytic chaperone that increases the ATP-binding affinity of the ATP-hydrolyzing subunit KdpB by the formation of a transient KdpB/KdpC/ATP ternary complex. In Geobacter sulfurreducens (strain ATCC 51573 / DSM 12127 / PCA), this protein is Potassium-transporting ATPase KdpC subunit.